Consider the following 758-residue polypeptide: 5-methyltetrahydropteroyltriglutamate--homocysteine methyltransferase (758 aa).

5-methyltetrahydropteroyltri-L-glutamate is bound by residues 16–19 (RELK) and lysine 112. L-homocysteine contacts are provided by residues 433–435 (IGS) and glutamate 486. Residues 433–435 (IGS) and glutamate 486 contribute to the L-methionine site. 5-methyltetrahydropteroyltri-L-glutamate is bound by residues 517–518 (RC) and tryptophan 563. An L-homocysteine-binding site is contributed by aspartate 601. Position 601 (aspartate 601) interacts with L-methionine. Glutamate 607 is a 5-methyltetrahydropteroyltri-L-glutamate binding site. Zn(2+) contacts are provided by histidine 643, cysteine 645, and glutamate 667. Histidine 696 functions as the Proton donor in the catalytic mechanism. Cysteine 728 is a binding site for Zn(2+).

Belongs to the vitamin-B12 independent methionine synthase family. The cofactor is Zn(2+).

It catalyses the reaction 5-methyltetrahydropteroyltri-L-glutamate + L-homocysteine = tetrahydropteroyltri-L-glutamate + L-methionine. The protein operates within amino-acid biosynthesis; L-methionine biosynthesis via de novo pathway; L-methionine from L-homocysteine (MetE route): step 1/1. Its function is as follows. Catalyzes the transfer of a methyl group from 5-methyltetrahydrofolate to homocysteine resulting in methionine formation. The polypeptide is 5-methyltetrahydropteroyltriglutamate--homocysteine methyltransferase (Neisseria meningitidis serogroup C (strain 053442)).